Reading from the N-terminus, the 133-residue chain is ATP synthase epsilon chain, sodium ion specific (133 aa).

Belongs to the ATPase epsilon chain family. As to quaternary structure, F-type ATPases have 2 components, CF(1) - the catalytic core - and CF(0) - the membrane proton channel. CF(1) has five subunits: alpha(3), beta(3), gamma(1), delta(1), epsilon(1). CF(0) has three main subunits: a, b and c.

The protein resides in the cell membrane. With respect to regulation, inhibited by nitrate. Its function is as follows. Produces ATP from ADP in the presence of a sodium gradient across the membrane. This chain is ATP synthase epsilon chain, sodium ion specific (atpC), found in Acetobacterium woodii (strain ATCC 29683 / DSM 1030 / JCM 2381 / KCTC 1655 / WB1).